Reading from the N-terminus, the 103-residue chain is MHKDELIQLHQLLIYLRKYIEKKYNCDNNEFKEYDELNIYPHHIHRTKAEHIYTIFLLSSIIAKILSDNGKIPRSVSNLLRVSGEKIKKEIQRKRCKIKNTNT.

This sequence belongs to the UPF0058 family.

The protein is UPF0058 protein MJ1205 of Methanocaldococcus jannaschii (strain ATCC 43067 / DSM 2661 / JAL-1 / JCM 10045 / NBRC 100440) (Methanococcus jannaschii).